The chain runs to 123 residues: MPTINQLIANPRKIQKSRNKVPALDACPQKRGVCTRVYTTTPKKPNSALRKVAKVRLTNGFEVIGYIPGEGHNLQEHSVVMIRGGRVKDLPGVRYHILRGVLDTQGVKNRKQRRSKYGAKRPK.

3-methylthioaspartic acid is present on D89.

This sequence belongs to the universal ribosomal protein uS12 family. In terms of assembly, part of the 30S ribosomal subunit. Contacts proteins S8 and S17. May interact with IF1 in the 30S initiation complex.

In terms of biological role, with S4 and S5 plays an important role in translational accuracy. Functionally, interacts with and stabilizes bases of the 16S rRNA that are involved in tRNA selection in the A site and with the mRNA backbone. Located at the interface of the 30S and 50S subunits, it traverses the body of the 30S subunit contacting proteins on the other side and probably holding the rRNA structure together. The combined cluster of proteins S8, S12 and S17 appears to hold together the shoulder and platform of the 30S subunit. This chain is Small ribosomal subunit protein uS12, found in Methylobacterium sp. (strain 4-46).